A 354-amino-acid chain; its full sequence is Uroporphyrinogen decarboxylase (354 aa).

Substrate contacts are provided by residues 27–31 (RQAGR), aspartate 77, tyrosine 154, threonine 209, and histidine 327.

This sequence belongs to the uroporphyrinogen decarboxylase family. In terms of assembly, homodimer.

It localises to the cytoplasm. The enzyme catalyses uroporphyrinogen III + 4 H(+) = coproporphyrinogen III + 4 CO2. Its pathway is porphyrin-containing compound metabolism; protoporphyrin-IX biosynthesis; coproporphyrinogen-III from 5-aminolevulinate: step 4/4. Catalyzes the decarboxylation of four acetate groups of uroporphyrinogen-III to yield coproporphyrinogen-III. The protein is Uroporphyrinogen decarboxylase of Citrobacter koseri (strain ATCC BAA-895 / CDC 4225-83 / SGSC4696).